A 533-amino-acid chain; its full sequence is Di/tripeptide-binding protein 4 (533 aa).

A signal peptide spans Met-1–Ala-25.

Belongs to the bacterial solute-binding protein 5 family. As to quaternary structure, the complex is composed of two ATP-binding proteins (DppD and DppF), two transmembrane proteins (DppB and DppC) and a solute-binding protein (DppA4). Five orthologous SBPs (DppA1-A5) are present in P.aeruginosa, which increases the substrate specificity of the DppBCDF transporter.

In terms of biological role, part of the ABC transporter DppABCDF involved in the uptake of various di/tripeptides. Prefers dipeptides with acidic residues at the C-terminal end. Efficiently uses tripeptides. In Pseudomonas aeruginosa (strain UCBPP-PA14), this protein is Di/tripeptide-binding protein 4.